The following is a 270-amino-acid chain: FKBP-type peptidyl-prolyl cis-trans isomerase FkpA (270 aa).

The first 25 residues, 1-25 (MKSLFKVTLLATTMAVALHAPITFA), serve as a signal peptide directing secretion. Residues 164 to 249 (SDTVVVNYKG…VFDVELLDVK (86 aa)) enclose the PPIase FKBP-type domain.

This sequence belongs to the FKBP-type PPIase family.

The protein resides in the periplasm. The enzyme catalyses [protein]-peptidylproline (omega=180) = [protein]-peptidylproline (omega=0). Functionally, PPIases accelerate the folding of proteins. It catalyzes the cis-trans isomerization of proline imidic peptide bonds in oligopeptides. The polypeptide is FKBP-type peptidyl-prolyl cis-trans isomerase FkpA (fkpA) (Escherichia coli (strain K12)).